The chain runs to 347 residues: Dehydratase asqC (347 aa).

The first 18 residues, 1–18, serve as a signal peptide directing secretion; the sequence is MRPAILAAFSTLPAAAKA. Residues N51, N103, N131, N143, N215, N264, and N281 are each glycosylated (N-linked (GlcNAc...) asparagine).

It carries out the reaction [(1'E)-5'-(3',3'-dimethyloxiran-2'-yl)-3'-hydroxy-3'-methylpent-1'-en-1'-yl]-quinolinone B = (1'E,3'E)-5-(3,3-dimethyloxiran-2-yl)-3-methylhexa-1,3-dienyl-quinolinone B + H2O. It functions in the pathway secondary metabolite biosynthesis. The protein operates within alkaloid biosynthesis. It participates in mycotoxin biosynthesis. Dehydratase; part of the gene cluster that mediates the biosynthesis of the aspoquinolone mycotoxins. Within the pathway, the dehydratase asqC catalyzes the dehydratation of the epoxide at C-3 to produce (1'E,3'E)-5-(3,3-dimethyloxiran-2-yl)-3-methylhexa-1,3-dienyl-quinolinone B. The first step of the pathway is catalyzed by the nonribosomal peptide synthetase asqK that condenses anthranilic acid and O-methyl-L-tyrosine to produce 4'-methoxycyclopeptin. 4'-methoxycyclopeptin is then converted to 4'-methoxydehydrocyclopeptin by the ketoglutarate-dependent dioxygenase asqJ. AsqJ also converts its first product 4'-methoxydehydrocyclopeptin to 4'-methoxycyclopenin. The following conversion of 4'-methoxycyclopenin into 4'-methoxyviridicatin is catalyzed by the cyclopenase asqI. 4'-methoxyviridicatin is the precursor of quinolone natural products, and is further converted to quinolinone B. The prenyltransferase asqH1 then catalyzes the canonical Friedel-Crafts alkylation of quinolinone B with dimethylallyl cation to yield dimethylallyl quinolone, which is subjected to FAD-dependent dehydrogenation by the FAD-linked oxidoreductase asqF to yield conjugated aryl diene. The delta(3') double bond then serves as the site of the second alkylation with DMAPP catalyzed by the prenyltransferase asqH2 to yield a carbenium ion intermediate, which can be attacked by H(2)O to yield a styrenyl quinolone containing a C3'-hydroxyprenyl chain. The FAD-dependent monooxygenase asqG performs epoxidation of the terminal C7'-C8' olefin. Finally, after dehydratation of the epoxide at C3 by asqC, the quinolone epoxide rearrangement protein asqO catalyzes an enzymatic 3-exo-tet cyclization to yield the cyclopropyl-THF ring system in aspoquinolone. The sequence is that of Dehydratase asqC from Emericella nidulans (strain FGSC A4 / ATCC 38163 / CBS 112.46 / NRRL 194 / M139) (Aspergillus nidulans).